Here is a 246-residue protein sequence, read N- to C-terminus: Proteolipid protein DM gamma (246 aa).

4 helical membrane passes run 19–35 (LLATILCFSGVALFCGC), 71–87 (VIYGVASFSFLYGIILL), 118–134 (VFLTYLLGIAWLGVFGF), and 206–222 (FIVACAGAGATVIALLI).

The protein belongs to the myelin proteolipid protein family. Highly expressed in white matter in myelinating shark brain.

The protein resides in the membrane. The polypeptide is Proteolipid protein DM gamma (Squalus acanthias (Spiny dogfish)).